Here is a 382-residue protein sequence, read N- to C-terminus: MNLKEKTRALFAEIFGYPATHTIQAPGRVNLIGEHTDYNDGFVLPCAIDYQTVISCAPRDDRTVRVIAADYDNQVDEFSLDAPIVTHDSQQWSNYVRGVVKHLQQRNNAFGGVDMVISGNVPQGAGLSSSASLEVAVGTVFQQLYHLPLDGAQIALNGQEAENQFVGCNCGIMDQLISALGKKDHALLIDCRTLGAKAVSMPKGVAVVIINSNFKRTLVGSEYNTHREQCETGARFFQQPALRDVSLEAFNAVASELDPVVAKRVRHVLSENARTVEAASALEKGDLQRMGQLMAESHASMRDDFEITVPQIDTLVDIVKATIGDQGGVRMTGGGFGGCVVALIPEDLVPAVQQAVAQQYEAKTGIKETFYVCKPSQGAGQC.

34–37 (EHTD) is a substrate binding site. 124–130 (GAGLSSS) provides a ligand contact to ATP. Mg(2+) contacts are provided by Ser130 and Glu162. Catalysis depends on Asp174, which acts as the Proton acceptor. Tyr223 contacts substrate.

It belongs to the GHMP kinase family. GalK subfamily.

The protein resides in the cytoplasm. The catalysed reaction is alpha-D-galactose + ATP = alpha-D-galactose 1-phosphate + ADP + H(+). Its pathway is carbohydrate metabolism; galactose metabolism. Functionally, catalyzes the transfer of the gamma-phosphate of ATP to D-galactose to form alpha-D-galactose-1-phosphate (Gal-1-P). This is Galactokinase from Salmonella gallinarum (strain 287/91 / NCTC 13346).